The primary structure comprises 427 residues: Glutamate-1-semialdehyde 2,1-aminomutase (427 aa).

Lys-265 is modified (N6-(pyridoxal phosphate)lysine).

The protein belongs to the class-III pyridoxal-phosphate-dependent aminotransferase family. HemL subfamily. As to quaternary structure, homodimer. Requires pyridoxal 5'-phosphate as cofactor.

Its subcellular location is the cytoplasm. It catalyses the reaction (S)-4-amino-5-oxopentanoate = 5-aminolevulinate. The protein operates within porphyrin-containing compound metabolism; protoporphyrin-IX biosynthesis; 5-aminolevulinate from L-glutamyl-tRNA(Glu): step 2/2. This chain is Glutamate-1-semialdehyde 2,1-aminomutase, found in Pseudomonas fluorescens (strain Pf0-1).